The chain runs to 422 residues: ATP phosphoribosyltransferase regulatory subunit (422 aa).

It belongs to the class-II aminoacyl-tRNA synthetase family. HisZ subfamily. In terms of assembly, heteromultimer composed of HisG and HisZ subunits.

It localises to the cytoplasm. It functions in the pathway amino-acid biosynthesis; L-histidine biosynthesis; L-histidine from 5-phospho-alpha-D-ribose 1-diphosphate: step 1/9. Its function is as follows. Required for the first step of histidine biosynthesis. May allow the feedback regulation of ATP phosphoribosyltransferase activity by histidine. The chain is ATP phosphoribosyltransferase regulatory subunit from Clostridium botulinum (strain 657 / Type Ba4).